The sequence spans 1096 residues: uncharacterized protein (1096 aa).

This sequence belongs to the IIV-6 261R/396L/443R family.

This is an uncharacterized protein from Invertebrate iridescent virus 3 (IIV-3).